A 270-amino-acid polypeptide reads, in one-letter code: Hydroxyethylthiazole kinase (270 aa).

Met-47 serves as a coordination point for substrate. ATP contacts are provided by Arg-123 and Thr-169. Residue Gly-196 coordinates substrate.

The protein belongs to the Thz kinase family. Mg(2+) serves as cofactor.

It carries out the reaction 5-(2-hydroxyethyl)-4-methylthiazole + ATP = 4-methyl-5-(2-phosphooxyethyl)-thiazole + ADP + H(+). It participates in cofactor biosynthesis; thiamine diphosphate biosynthesis; 4-methyl-5-(2-phosphoethyl)-thiazole from 5-(2-hydroxyethyl)-4-methylthiazole: step 1/1. Functionally, catalyzes the phosphorylation of the hydroxyl group of 4-methyl-5-beta-hydroxyethylthiazole (THZ). The chain is Hydroxyethylthiazole kinase from Roseiflexus castenholzii (strain DSM 13941 / HLO8).